We begin with the raw amino-acid sequence, 817 residues long: MEEKKGEPLFGKVVPLPLVEEIKHSYLDYAMSVIVGRALPDARDGLKPVQRRILYAMMELGLRHNTAYKKSARVVGETMGKYHPHGDSAIYDTMVRMAQDFSMRYPLVDGQGNFGSIDGDPAAAMRYTEARLYEIGELMLADIDQDTVDWGPNFDESLQEPLCLPAMLPNLLINGSSGIAVGMATNIPPHNLVEVVDALCYLIDTEPEQVDIGEILFRMPGPDFPTGGLILGRDGIIDAYRTGRGKITMRGRTHIEEGKRGKTFIVITEIPYMVNKTNLIETIAKNVQDKTIDGVMDLRDESDREGLRIVIEVNRDTDPNLVLRQLYRRTQLQSTFGVINLALIDGYPKELSIEEMLNIFLNHRRSVVRRRTQFRLEKAEARAHIVEGLVKALDIIDEVIALIRGSATTEEAKEGLISKLDFSEAQAQAILEMRLQRLTGLEREKLEAELAQLLSDIERYQTILGNPKVLDSVIKEELLEVKRRFGNERKTEIIDAVEDVSIEDLIPESDIVVVLSRDGYLRRKDLQEYTLQGRGGKGRKGTALQEEDEVALVAVTSTHRDIYLFTSKGRVLALKGYVIPESKTGRGKLINRFVALEEGERVVTMHGRAVDGAKYAFFITLRGTAKRLDLSELENLTRAGRRVMGLDEGDEISQIVLTSGDDHLLIVTAQGQALRTHESEFRPMGRTARGVRGIRLRKNDYVIGCDVVANGRWPLLLSENGFGKRTKYDEFSLRHRGGSGVIVMNLSDRTGLIVGCWSVAEGDEIVAITSRGRMIRLAVSESPVLGRTAMGSIMMRLDEGDTVATASVVSTEDGEDD.

Residues 39-505 form the Topo IIA-type catalytic domain; that stretch reads LPDARDGLKP…AVEDVSIEDL (467 aa). Y127 acts as the O-(5'-phospho-DNA)-tyrosine intermediate in catalysis. Residues 532 to 538 carry the GyrA-box motif; the sequence is QGRGGKG.

The protein belongs to the type II topoisomerase GyrA/ParC subunit family. As to quaternary structure, heterotetramer, composed of two GyrA and two GyrB chains. In the heterotetramer, GyrA contains the active site tyrosine that forms a transient covalent intermediate with DNA, while GyrB binds cofactors and catalyzes ATP hydrolysis.

The protein localises to the cytoplasm. The catalysed reaction is ATP-dependent breakage, passage and rejoining of double-stranded DNA.. In terms of biological role, a type II topoisomerase that negatively supercoils closed circular double-stranded (ds) DNA in an ATP-dependent manner to modulate DNA topology and maintain chromosomes in an underwound state. Negative supercoiling favors strand separation, and DNA replication, transcription, recombination and repair, all of which involve strand separation. Also able to catalyze the interconversion of other topological isomers of dsDNA rings, including catenanes and knotted rings. Type II topoisomerases break and join 2 DNA strands simultaneously in an ATP-dependent manner. This is DNA gyrase subunit A from Aminobacterium colombiense (strain DSM 12261 / ALA-1).